A 467-amino-acid polypeptide reads, in one-letter code: ATP synthase subunit beta (467 aa).

150 to 157 (GGAGVGKT) contacts ATP.

The protein belongs to the ATPase alpha/beta chains family. F-type ATPases have 2 components, CF(1) - the catalytic core - and CF(0) - the membrane proton channel. CF(1) has five subunits: alpha(3), beta(3), gamma(1), delta(1), epsilon(1). CF(0) has three main subunits: a(1), b(2) and c(9-12). The alpha and beta chains form an alternating ring which encloses part of the gamma chain. CF(1) is attached to CF(0) by a central stalk formed by the gamma and epsilon chains, while a peripheral stalk is formed by the delta and b chains.

The protein localises to the cell inner membrane. The catalysed reaction is ATP + H2O + 4 H(+)(in) = ADP + phosphate + 5 H(+)(out). Its function is as follows. Produces ATP from ADP in the presence of a proton gradient across the membrane. The catalytic sites are hosted primarily by the beta subunits. This is ATP synthase subunit beta from Vibrio vulnificus (strain YJ016).